The sequence spans 164 residues: Endoribonuclease YbeY (164 aa).

3 residues coordinate Zn(2+): His-124, His-128, and His-134.

The protein belongs to the endoribonuclease YbeY family. The cofactor is Zn(2+).

It is found in the cytoplasm. Its function is as follows. Single strand-specific metallo-endoribonuclease involved in late-stage 70S ribosome quality control and in maturation of the 3' terminus of the 16S rRNA. The chain is Endoribonuclease YbeY from Nitrosomonas europaea (strain ATCC 19718 / CIP 103999 / KCTC 2705 / NBRC 14298).